Reading from the N-terminus, the 110-residue chain is Large ribosomal subunit protein uL22 (110 aa).

The protein belongs to the universal ribosomal protein uL22 family. As to quaternary structure, part of the 50S ribosomal subunit.

Its function is as follows. This protein binds specifically to 23S rRNA; its binding is stimulated by other ribosomal proteins, e.g. L4, L17, and L20. It is important during the early stages of 50S assembly. It makes multiple contacts with different domains of the 23S rRNA in the assembled 50S subunit and ribosome. The globular domain of the protein is located near the polypeptide exit tunnel on the outside of the subunit, while an extended beta-hairpin is found that lines the wall of the exit tunnel in the center of the 70S ribosome. The chain is Large ribosomal subunit protein uL22 from Chromohalobacter salexigens (strain ATCC BAA-138 / DSM 3043 / CIP 106854 / NCIMB 13768 / 1H11).